Reading from the N-terminus, the 249-residue chain is tRNA (guanine-N(1)-)-methyltransferase (249 aa).

S-adenosyl-L-methionine contacts are provided by residues Gly-116 and 136 to 141 (IGDYIL).

Belongs to the RNA methyltransferase TrmD family. In terms of assembly, homodimer.

Its subcellular location is the cytoplasm. The catalysed reaction is guanosine(37) in tRNA + S-adenosyl-L-methionine = N(1)-methylguanosine(37) in tRNA + S-adenosyl-L-homocysteine + H(+). Functionally, specifically methylates guanosine-37 in various tRNAs. The sequence is that of tRNA (guanine-N(1)-)-methyltransferase from Zymomonas mobilis subsp. mobilis (strain ATCC 31821 / ZM4 / CP4).